The chain runs to 198 residues: Transcriptional regulator GfcR (198 aa).

This sequence belongs to the purine/pyrimidine phosphoribosyltransferase family. GfcR subfamily.

The chain is Transcriptional regulator GfcR from Methanospirillum hungatei JF-1 (strain ATCC 27890 / DSM 864 / NBRC 100397 / JF-1).